A 102-amino-acid chain; its full sequence is Large ribosomal subunit protein bL21 (102 aa).

It belongs to the bacterial ribosomal protein bL21 family. In terms of assembly, part of the 50S ribosomal subunit. Contacts protein L20.

Its function is as follows. This protein binds to 23S rRNA in the presence of protein L20. The sequence is that of Large ribosomal subunit protein bL21 from Leptospira biflexa serovar Patoc (strain Patoc 1 / Ames).